The primary structure comprises 150 residues: Soluble pyridine nucleotide transhydrogenase (150 aa).

It belongs to the class-I pyridine nucleotide-disulfide oxidoreductase family. It depends on FAD as a cofactor.

The protein localises to the cytoplasm. It catalyses the reaction NAD(+) + NADPH = NADH + NADP(+). Functionally, conversion of NADPH, generated by peripheral catabolic pathways, to NADH, which can enter the respiratory chain for energy generation. The protein is Soluble pyridine nucleotide transhydrogenase (sthA) of Pectobacterium carotovorum subsp. carotovorum (Erwinia carotovora subsp. carotovora).